We begin with the raw amino-acid sequence, 88 residues long: uncharacterized protein (88 aa).

Residues 1–88 (MPHLPELSKQ…IRRGNPSGVA (88 aa)) form a disordered region. Over residues 21–65 (YRAKGEDLENSHHNNESRLAEGVHYDRNKAPALQEREKASTEKVN) the composition is skewed to basic and acidic residues.

In terms of biological role, involved in osmoadaptation. This is an uncharacterized protein from Emericella nidulans (strain FGSC A4 / ATCC 38163 / CBS 112.46 / NRRL 194 / M139) (Aspergillus nidulans).